A 950-amino-acid polypeptide reads, in one-letter code: Inactive atromentin synthetase invA4 (950 aa).

The adenylation (A) domain stretch occupies residues 37–460 (SRAVSQYPNH…SGRIKDTVVV (424 aa)). Residues 592-670 (APSTETEKTL…TLAKYVDSLV (79 aa)) enclose the Carrier domain. The thiolation and peptide carrier (T) domain stretch occupies residues 597–667 (TEKTLAGIYA…EIITLAKYVD (71 aa)). Residue Ser629 is modified to O-(pantetheine 4'-phosphoryl)serine. The interval 693–797 (PIFMVHPGIG…GIIDMIPHHM (105 aa)) is thioesterase (TE) domain.

It belongs to the ATP-dependent AMP-binding enzyme family.

Functionally, inactive atromentin synthetase homolog. Does not accept 4-hydroxyphenylpyruvate (4-HPP) as substrate. The polypeptide is Inactive atromentin synthetase invA4 (invA4) (Paxillus involutus (Naked brimcap)).